The primary structure comprises 120 residues: Large ribosomal subunit protein eL8 (120 aa).

Belongs to the eukaryotic ribosomal protein eL8 family. Part of the 50S ribosomal subunit. Probably part of the RNase P complex.

It localises to the cytoplasm. In terms of biological role, multifunctional RNA-binding protein that recognizes the K-turn motif in ribosomal RNA, the RNA component of RNase P, box H/ACA, box C/D and box C'/D' sRNAs. In Halobacterium salinarum (strain ATCC 29341 / DSM 671 / R1), this protein is Large ribosomal subunit protein eL8.